The sequence spans 137 residues: 6,7-dimethyl-8-ribityllumazine synthase (137 aa).

Residues F11, 43–45, and 67–69 contribute to the 5-amino-6-(D-ribitylamino)uracil site; these read SFD and CVI. 72 to 73 is a binding site for (2S)-2-hydroxy-3-oxobutyl phosphate; sequence DT. H75 acts as the Proton donor in catalysis. A 5-amino-6-(D-ribitylamino)uracil-binding site is contributed by L100. Residue R115 coordinates (2S)-2-hydroxy-3-oxobutyl phosphate.

This sequence belongs to the DMRL synthase family. As to quaternary structure, forms an icosahedral capsid composed of 60 subunits, arranged as a dodecamer of pentamers.

It carries out the reaction (2S)-2-hydroxy-3-oxobutyl phosphate + 5-amino-6-(D-ribitylamino)uracil = 6,7-dimethyl-8-(1-D-ribityl)lumazine + phosphate + 2 H2O + H(+). It functions in the pathway cofactor biosynthesis; riboflavin biosynthesis; riboflavin from 2-hydroxy-3-oxobutyl phosphate and 5-amino-6-(D-ribitylamino)uracil: step 1/2. Functionally, catalyzes the formation of 6,7-dimethyl-8-ribityllumazine by condensation of 5-amino-6-(D-ribitylamino)uracil with 3,4-dihydroxy-2-butanone 4-phosphate. This is the penultimate step in the biosynthesis of riboflavin. The chain is 6,7-dimethyl-8-ribityllumazine synthase from Methanococcus maripaludis (strain C6 / ATCC BAA-1332).